Consider the following 143-residue polypeptide: Large ribosomal subunit protein uL11 (143 aa).

This sequence belongs to the universal ribosomal protein uL11 family. As to quaternary structure, part of the ribosomal stalk of the 50S ribosomal subunit. Interacts with L10 and the large rRNA to form the base of the stalk. L10 forms an elongated spine to which L12 dimers bind in a sequential fashion forming a multimeric L10(L12)X complex. Post-translationally, one or more lysine residues are methylated.

In terms of biological role, forms part of the ribosomal stalk which helps the ribosome interact with GTP-bound translation factors. In Bordetella pertussis (strain Tohama I / ATCC BAA-589 / NCTC 13251), this protein is Large ribosomal subunit protein uL11.